A 630-amino-acid polypeptide reads, in one-letter code: Chaperone protein HtpG (630 aa).

The a; substrate-binding stretch occupies residues 1–338; that stretch reads MTVEANKETL…SNDLSLNVSR (338 aa). The tract at residues 339–555 is b; sequence EILQNDSTVE…QFDMGAQMKK (217 aa). The segment at 556 to 630 is c; it reads IMEAAGQKVP…LNRLLLELAN (75 aa).

This sequence belongs to the heat shock protein 90 family. In terms of assembly, homodimer.

The protein resides in the cytoplasm. Its function is as follows. Molecular chaperone. Has ATPase activity. The protein is Chaperone protein HtpG of Marinobacter nauticus (strain ATCC 700491 / DSM 11845 / VT8) (Marinobacter aquaeolei).